Here is a 186-residue protein sequence, read N- to C-terminus: ATP synthase subunit b' (186 aa).

A helical membrane pass occupies residues 39 to 59; it reads IFWLLLALGAIYWLLKNIAIP.

Belongs to the ATPase B chain family. As to quaternary structure, F-type ATPases have 2 components, F(1) - the catalytic core - and F(0) - the membrane proton channel. F(1) has five subunits: alpha(3), beta(3), gamma(1), delta(1), epsilon(1). F(0) has four main subunits: a(1), b(1), b'(1) and c(10-14). The alpha and beta chains form an alternating ring which encloses part of the gamma chain. F(1) is attached to F(0) by a central stalk formed by the gamma and epsilon chains, while a peripheral stalk is formed by the delta, b and b' chains.

Its subcellular location is the cellular chromatophore membrane. F(1)F(0) ATP synthase produces ATP from ADP in the presence of a proton or sodium gradient. F-type ATPases consist of two structural domains, F(1) containing the extramembraneous catalytic core and F(0) containing the membrane proton channel, linked together by a central stalk and a peripheral stalk. During catalysis, ATP synthesis in the catalytic domain of F(1) is coupled via a rotary mechanism of the central stalk subunits to proton translocation. In terms of biological role, component of the F(0) channel, it forms part of the peripheral stalk, linking F(1) to F(0). The b'-subunit is a diverged and duplicated form of b found in plants and photosynthetic bacteria. This is ATP synthase subunit b' from Rhodobacter capsulatus (Rhodopseudomonas capsulata).